Here is a 397-residue protein sequence, read N- to C-terminus: MQSPYVREAVREMDLPDEVIVYDTTLRDGEQTPGVSFTPEQKLEIAHLLDELGVQQIEAGFPVVSEGERDAVRRIAHEGLNADILCLARTLRGDVDAALDCDVDGVITFIATSELHLKHKLRMSREEVLERIADTVEYAKDHGLWVAFSAEDGTRTEFEFLERVYRTAEECGADRVHATDTVGVMIPAAMRLFVAKIREVVDLPIGVHCHDDFGMAVANSLAAVEAGAQAISTTVNGIGERAGNAALEEVIMALKELYGIDPGFNTEVLAELSRKVSEYSGIDVPPNKAVVGENAFRHESGIHVAAVLEEPRTYEPIDPKEVGMNRKIVLGKHTGRKAVVAKLEELGVEPEEEIVEEVLKRIKALGDRRVRVTDSKLEEIVRNVLESRGDRDDPGSR.

The region spanning 19-270 (VIVYDTTLRD…DPGFNTEVLA (252 aa)) is the Pyruvate carboxyltransferase domain.

This sequence belongs to the alpha-IPM synthase/homocitrate synthase family.

It carries out the reaction acetyl-CoA + 2-oxoglutarate + H2O = (2R)-homocitrate + CoA + H(+). It catalyses the reaction 2-oxoadipate + acetyl-CoA + H2O = (R)-dihomocitrate + CoA + H(+). The catalysed reaction is 2-oxoheptanedioate + acetyl-CoA + H2O = (R)-trihomocitrate + CoA + H(+). The protein operates within organic acid metabolism; 2-oxosuberate biosynthesis. Functionally, catalyzes the condensation of alpha-ketoglutarate and acetyl-CoA to form (R)-homocitrate. Can also catalyze the condensation of alpha-ketoadipate with acetyl-CoA to form (R)-homo(2)citrate, and the condensation of alpha-ketopimelate with acetyl-CoA to form (R)-homo(3)citrate. These reactions are part of the biosynthesis pathway of coenzyme B and biotin. The protein is Homocitrate synthase AksA (aksA) of Methanopyrus kandleri (strain AV19 / DSM 6324 / JCM 9639 / NBRC 100938).